A 290-amino-acid polypeptide reads, in one-letter code: Urease accessory protein UreD (290 aa).

This sequence belongs to the UreD family. UreD, UreF and UreG form a complex that acts as a GTP-hydrolysis-dependent molecular chaperone, activating the urease apoprotein by helping to assemble the nickel containing metallocenter of UreC. The UreE protein probably delivers the nickel.

It localises to the cytoplasm. Required for maturation of urease via the functional incorporation of the urease nickel metallocenter. This chain is Urease accessory protein UreD, found in Paenarthrobacter aurescens (strain TC1).